Reading from the N-terminus, the 898-residue chain is MRPMRIFVNDDRHVMAKHSSVYPTQEELEAVQNMVSHTERALKAVSDWIDEQEKGNSELSEAENMDTPPDDESKEGAGEQKAEHMTRTLRGVMRVGLVAKGLLLKGDLDLELVLLCKEKPTTALLDKVADNLAIQLTTVTEDKYEILQSVDDAAIVIKNTKEPPLSLTIHLTSPVVREEMEKVLAGETLSVNDPPDVLDRQKCLAALASLRHAKWFQARANGLKSCVIVIRVLRDLCTRVPTWGPLRGWPLELLCEKSIGTANRPMGAGEALRRVLECLASGIVMPDGSGIYDPCEKEATDAIGHLDRQQREDITQSAQHALRLAAFGQLHKVLGMDPLPSKMPKKPKNENPVDYTVQIPPSTTYAITPMKRPMEEDGEEKSPSKKKKKIQKKEEKADPPQAMNALMRLNQLKPGLQYKLISQTGPVHAPIFTMSVEVDGSNFEASGPSKKTAKLHVAVKVLQDMGLPTGAEGRDSSKGEDSAEESDGKPAIVAPPPVVEAVSNPSSVFPSDATTEQGPILTKHGKNPVMELNEKRRGLKYELISETGGSHDKRFVMEVEVDGQKFQGAGSNKKVAKAYAALAALEKLFPDTPLALEANKKKRTPVPVRGGPKFAAKPHNPGFGMGGPMHNEVPPPPNIRGRGRGGNIRGRGRGRGFGGANHGGGYMNAGAGYGSYGYSSNSATAGYSQFYSNGGHSGNAGGGGSGGGGGSSSYSSYYQGDSYNSPVPPKHAGKKPLHGGQQKASYSSGYQSHQGQQQPYNQSQYSSYGTPQGKQKGYGHGQGSYSSYSNSYNSPGGGGGSDYSYDSKFNYSGSGGRSGGNSYGSSGSSSYNTGSHGGYGTGSGGSSSYQGKQGGYSSQSNYSSPGSSQSYSGPASSYQSSQGGYSRNTEHSMNYQYR.

Residues 5–378 enclose the DZF domain; it reads RIFVNDDRHV…PMKRPMEEDG (374 aa). A disordered region spans residues 52–85; sequence QEKGNSELSEAENMDTPPDDESKEGAGEQKAEHM. Over residues 60 to 73 the composition is skewed to acidic residues; that stretch reads SEAENMDTPPDDES. At Thr-67 the chain carries Phosphothreonine. Residues 74–85 show a composition bias toward basic and acidic residues; sequence KEGAGEQKAEHM. Position 100 is an N6-acetyllysine (Lys-100). Thr-188 carries the post-translational modification Phosphothreonine; by PKR. Ser-190 bears the Phosphoserine mark. A Glycyl lysine isopeptide (Lys-Gly) (interchain with G-Cter in ubiquitin) cross-link involves residue Lys-297. Thr-315 is modified (phosphothreonine; by PKR). Residue Lys-348 forms a Glycyl lysine isopeptide (Lys-Gly) (interchain with G-Cter in SUMO1) linkage. Positions 363 to 402 are disordered; it reads TTYAITPMKRPMEEDGEEKSPSKKKKKIQKKEEKADPPQA. The Bipartite nuclear localization signal signature appears at 371-389; it reads KRPMEEDGEEKSPSKKKKK. The span at 372 to 383 shows a compositional bias: basic and acidic residues; the sequence is RPMEEDGEEKSP. Ser-382 and Ser-384 each carry phosphoserine. Lys-396 participates in a covalent cross-link: Glycyl lysine isopeptide (Lys-Gly) (interchain with G-Cter in SUMO2). One can recognise a DRBM 1 domain in the interval 398–467; that stretch reads DPPQAMNALM…AVKVLQDMGL (70 aa). Lys-460 carries the N6-acetyllysine modification. 2 disordered regions span residues 466 to 495 and 505 to 524; these read GLPT…IVAP and PSSV…LTKH. A compositionally biased stretch (basic and acidic residues) spans 472 to 481; it reads EGRDSSKGED. Phosphoserine is present on residues Ser-476, Ser-477, Ser-482, and Ser-486. Residue Lys-489 forms a Glycyl lysine isopeptide (Lys-Gly) (interchain with G-Cter in SUMO2) linkage. In terms of domain architecture, DRBM 2 spans 524–590; sequence HGKNPVMELN…ALAALEKLFP (67 aa). Thr-592 carries the post-translational modification Phosphothreonine. The interaction with PRMT1 stretch occupies residues 609–898; that stretch reads RGGPKFAAKP…TEHSMNYQYR (290 aa). Disordered regions lie at residues 631 to 661 and 719 to 898; these read NEVP…GGAN and QGDS…YQYR. Positions 644 to 661 are enriched in gly residues; that stretch reads RGGNIRGRGRGRGFGGAN. Composition is skewed to low complexity over residues 745–769, 783–794, and 802–812; these read SYSS…SSYG, GSYSSYSNSYNS, and DYSYDSKFNYS. Residues Ser-794, Ser-812, Ser-814, and Ser-818 each carry the phosphoserine modification. Positions 813 to 822 are enriched in gly residues; sequence GSGGRSGGNS. Over residues 823–834 the composition is skewed to low complexity; the sequence is YGSSGSSSYNTG. Residues 835-845 show a composition bias toward gly residues; the sequence is SHGGYGTGSGG. The span at 846-886 shows a compositional bias: low complexity; the sequence is SSSYQGKQGGYSSQSNYSSPGSSQSYSGPASSYQSSQGGYS.

Identified in a IGF2BP1-dependent mRNP granule complex containing untranslated mRNAs. Interacts with FUS and SMN. Interacts (via C-terminus) with PRMT1. Forms a complex with ILF2. Can also bind to PRKDC/XRCC7: this may stabilize the interaction of PRKDC/XRCC7 and the heterodimeric complex of XRCC6/KU70 and XRCC5/KU80. Forms a heteromeric complex with ZNF346 and ILF3. Found in a nuclear export complex with XPO5, ILF3, Ran and double-stranded RNA or double-stranded minihelix VA1 RNA. Found in a nuclear export complex with XPO5, RAN, ILF3, ZNF346 and double-stranded RNA. Interacts with XPO5 and ZNF346. Forms a complex with ILF2, YLPM1, KHDRBS1, RBMX, NCOA5 and PPP1CA. Interacts with AGO1 and AGO2. Interacts with DHX36; this interaction occurs in a RNA-dependent manner. Interacts with ELAVL1; this interaction occurs in a RNA-dependent manner. Interacts with HAVCR2; this interaction promotes ILF3 ubiquitination and subsequent degradation. Phosphorylated at Thr-188 and Thr-315 by PKR in response to RNA viruses. This phosphorylation results in the dissociation of ILF2 from the ILF2-ILF3 complex resulting in a cytoplasmic sequestration of ILF3 where it can bind to viral RNAs and impede viral replication. Post-translationally, methylated by protein arginine N-methyltransferase 1. In terms of tissue distribution, ubiquitous. Expressed at high levels in the thymus, testis, ovary and at lower levelss in the spleen.

Its subcellular location is the nucleus. It localises to the nucleolus. It is found in the cytoplasm. In terms of biological role, RNA-binding protein that plays an essential role in the biogenesis of circular RNAs (circRNAs) which are produced by back-splicing circularization of pre-mRNAs. Within the nucleus, promotes circRNAs processing by stabilizing the regulatory elements residing in the flanking introns of the circularized exons. Plays thereby a role in the back-splicing of a subset of circRNAs. As a consequence, participates in a wide range of transcriptional and post-transcriptional processes. Binds to poly-U elements and AU-rich elements (AREs) in the 3'-UTR of target mRNAs. Upon viral infection, ILF3 accumulates in the cytoplasm and participates in the innate antiviral response. Mechanistically, ILF3 becomes phosphorylated and activated by the double-stranded RNA-activated protein kinase/PKR which releases ILF3 from cellular mature circRNAs. In turn, unbound ILF3 molecules are able to interact with and thus inhibit viral mRNAs. The protein is Interleukin enhancer-binding factor 3 (Ilf3) of Mus musculus (Mouse).